Here is a 103-residue protein sequence, read N- to C-terminus: Thrombin inhibitor rhodniin (103 aa).

Kazal-like domains follow at residues 1–50 (EGGE…PCEP) and 51–103 (DEDE…PCRT). 6 disulfide bridges follow: cysteine 6–cysteine 31, cysteine 8–cysteine 27, cysteine 16–cysteine 48, cysteine 57–cysteine 84, cysteine 60–cysteine 80, and cysteine 69–cysteine 101.

Its subcellular location is the secreted. Thrombin-specific inhibitor. Appears to form 1:1 complexes with thrombin. Prevents blood clotting to allow the insect to feed on blood. This chain is Thrombin inhibitor rhodniin, found in Rhodnius prolixus (Triatomid bug).